We begin with the raw amino-acid sequence, 300 residues long: Acetylglutamate kinase (300 aa).

Substrate contacts are provided by residues 68-69 (GG), Arg90, and Asn195.

It belongs to the acetylglutamate kinase family. ArgB subfamily.

It is found in the cytoplasm. The enzyme catalyses N-acetyl-L-glutamate + ATP = N-acetyl-L-glutamyl 5-phosphate + ADP. It functions in the pathway amino-acid biosynthesis; L-arginine biosynthesis; N(2)-acetyl-L-ornithine from L-glutamate: step 2/4. Catalyzes the ATP-dependent phosphorylation of N-acetyl-L-glutamate. The chain is Acetylglutamate kinase from Azotobacter vinelandii (strain DJ / ATCC BAA-1303).